The following is a 715-amino-acid chain: D-ribulokinase YDR109C (715 aa).

The interval Met-1–Ile-27 is disordered.

This sequence belongs to the FGGY kinase family.

It catalyses the reaction D-ribulose + ATP = D-ribulose 5-phosphate + ADP + H(+). It participates in carbohydrate metabolism; pentose and glucuronate interconversion. Its function is as follows. Catalyzes ATP-dependent phosphorylation of D-ribulose at C-5 to form D-ribulose 5-phosphate. Postulated to function in a metabolite repair mechanism by preventing toxic accumulation of free D-ribulose formed by non-specific phosphatase activities. Alternatively, may play a role in regulating D-ribulose 5-phosphate recycling in the pentose phosphate pathway. The polypeptide is D-ribulokinase YDR109C (Saccharomyces cerevisiae (strain ATCC 204508 / S288c) (Baker's yeast)).